The primary structure comprises 440 residues: Acyltransferase Pun1 (440 aa).

Catalysis depends on proton acceptor residues H169 and D384.

The protein belongs to the plant acyltransferase family.

The enzyme catalyses vanillylamine + (6E)-8-methylnon-6-enoyl-CoA = capsaicin + CoA + H(+). It catalyses the reaction (6E)-8-methylnon-6-enoyl-CoA + 4-hydroxy-3-methoxy-benzenemethanol = capsiate + CoA. Its function is as follows. Involved in the biosynthesis of capsaicinoids and capsinoids natural products, pungent alkaloids synthesized from phenylpropanoid intermediates in the placental tissue of chili pepper fruit acting as repellant on herbivorous mammals and conferring spiciness to hot peppers. Catalyzes the biosynthesis of capsaicin, a pungent component, and of capsiate, a non-pungent component, from vanillylamine and vanillyl alcohol, respectively. Can transfer an acyl from 8-methylnon-6-enoyl-CoA to vanillylamine forming capsaicin and CoA. The sequence is that of Acyltransferase Pun1 from Capsicum frutescens (Cayenne pepper).